The chain runs to 237 residues: Ribonuclease PH (237 aa).

Residues R86 and 124–126 (GTR) contribute to the phosphate site.

It belongs to the RNase PH family. Homohexameric ring arranged as a trimer of dimers.

It catalyses the reaction tRNA(n+1) + phosphate = tRNA(n) + a ribonucleoside 5'-diphosphate. Functionally, phosphorolytic 3'-5' exoribonuclease that plays an important role in tRNA 3'-end maturation. Removes nucleotide residues following the 3'-CCA terminus of tRNAs; can also add nucleotides to the ends of RNA molecules by using nucleoside diphosphates as substrates, but this may not be physiologically important. Probably plays a role in initiation of 16S rRNA degradation (leading to ribosome degradation) during starvation. The polypeptide is Ribonuclease PH (Idiomarina loihiensis (strain ATCC BAA-735 / DSM 15497 / L2-TR)).